The primary structure comprises 300 residues: F-box/LRR-repeat protein 15 (300 aa).

The residue at position 1 (M1) is an N-acetylmethionine. The F-box domain occupies 19 to 66 (LLDLPWEDVLLPHILSRVPLRQLLRLQRVSRAFRALVQLHLAGLRRFD). The interaction with SMURF1 stretch occupies residues 113–269 (NPQLRSVALA…EPSLSRLRKR (157 aa)). LRR repeat units lie at residues 141–162 (RLQR…RGLA), 167–188 (ALEE…VYLA), 194–215 (GLRS…QELA), 220–241 (ELEH…RTLA), and 246–267 (ALRS…SRLR).

It belongs to the FBXL15 family. As to quaternary structure, part of the SCF (SKP1-CUL1-F-box) E3 ubiquitin-protein ligase complex SCF(FBXL15) composed of CUL1, SKP1, RBX1 and FBXL15.

The protein localises to the cytoplasm. It functions in the pathway protein modification; protein ubiquitination. Functionally, substrate recognition component of a SCF (SKP1-CUL1-F-box protein) E3 ubiquitin-protein ligase complex which mediates the ubiquitination and subsequent proteasomal degradation of SMURF1, thereby acting as a positive regulator of the BMP signaling pathway. Required for dorsal/ventral pattern formation and bone mass maintenance. Also mediates ubiquitination of SMURF2 and WWP2. The chain is F-box/LRR-repeat protein 15 (FBXL15) from Canis lupus familiaris (Dog).